The primary structure comprises 320 residues: GMP reductase (320 aa).

Catalysis depends on cysteine 174, which acts as the Thioimidate intermediate. 203–226 is an NADP(+) binding site; it reads IIADGGLRVNGDIAKSIRFGATMC.

It belongs to the IMPDH/GMPR family. GuaC type 2 subfamily.

It carries out the reaction IMP + NH4(+) + NADP(+) = GMP + NADPH + 2 H(+). In terms of biological role, catalyzes the irreversible NADPH-dependent deamination of GMP to IMP. It functions in the conversion of nucleobase, nucleoside and nucleotide derivatives of G to A nucleotides, and in maintaining the intracellular balance of A and G nucleotides. This chain is GMP reductase, found in Mesoplasma florum (strain ATCC 33453 / NBRC 100688 / NCTC 11704 / L1) (Acholeplasma florum).